We begin with the raw amino-acid sequence, 274 residues long: 3-methyl-2-oxobutanoate hydroxymethyltransferase (274 aa).

Positions 54 and 93 each coordinate Mg(2+). Residues 54-55 (DS), Asp93, and Lys121 each bind 3-methyl-2-oxobutanoate. Glu123 serves as a coordination point for Mg(2+). Catalysis depends on Glu190, which acts as the Proton acceptor.

The protein belongs to the PanB family. In terms of assembly, homodecamer; pentamer of dimers. Mg(2+) is required as a cofactor.

The protein localises to the cytoplasm. It catalyses the reaction 3-methyl-2-oxobutanoate + (6R)-5,10-methylene-5,6,7,8-tetrahydrofolate + H2O = 2-dehydropantoate + (6S)-5,6,7,8-tetrahydrofolate. Its pathway is cofactor biosynthesis; (R)-pantothenate biosynthesis; (R)-pantoate from 3-methyl-2-oxobutanoate: step 1/2. In terms of biological role, catalyzes the reversible reaction in which hydroxymethyl group from 5,10-methylenetetrahydrofolate is transferred onto alpha-ketoisovalerate to form ketopantoate. The sequence is that of 3-methyl-2-oxobutanoate hydroxymethyltransferase from Ralstonia nicotianae (strain ATCC BAA-1114 / GMI1000) (Ralstonia solanacearum).